We begin with the raw amino-acid sequence, 723 residues long: MAALCEAFTLCGLGPAGGVGLGSGLLALEPGADPDHVLLTDRGRTTTLFKVSDQKPLGCWSVKHGQIITCPVVCNFETHEYIAVHDNKVLRIWKDEDVNLDKVFKATLSAEVYRIHSLPHAEPLVLFKGGGVRTLDVLLEAPQQEIENVISDEVIKWSEAFLESRQPVLIFVTEKDGDFFVYVQKPKMRSLHKYKLEQQELCNPLSFTAYIKKQIITLLCLYSSDSVYKVLIPLQQSSEEEEQTSSKSLLLNLSISGSVLKGTSFVVLDKDHVAVLGSLAASGEESKECLTIWNTKFQTLQASKELPLGTSGQLWCYGEKFFFTHGKVLTVVIYKCETSSLAAAVGKLKDSQTSDLSSFVNWNTLGDEELLVSLQSQQSVALKSESKMTLRSKKSAVANIQPDTSTVGQFLLSIKDASTAAVEDQLRQLLSKAQMPDFQATIGCIISALINRCKTDPKFYPRNFLVQMIQKGELSYSLCPDLMAVALEKKDVHLLQICLQRFPDIPEEITYACLKVFLSISDDYLERTDVNLESVISYIDIEPNNKEVKTEVVENGFNTELEEDGCDVTGMKETHMMDSVEFCPVGPQKAALLNAVLHSAYSETFLLPHLKDLPAQQAVLFLRYLHYLYVKCSEKINTTLPGILSPTISQIMDWMCLLLDAHFTVMVMLPEAKGLLSSMHRFVRAQVRLYSELNKIEGSLQELQRIKCQKHSQAYSIEVLELI.

It is found in the nucleus. The protein resides in the nucleolus. In terms of biological role, ribosome biogenesis factor. May be required for both optimal rDNA transcription and pre-rRNA processing. The polypeptide is Nucleolar protein 11 (NOL11) (Gallus gallus (Chicken)).